The following is a 129-amino-acid chain: Small ribosomal subunit protein eS6 (129 aa).

A disordered region spans residues 106 to 129; sequence QINASIVSRGEQSIDDLLGGEDDE.

The protein belongs to the eukaryotic ribosomal protein eS6 family.

This is Small ribosomal subunit protein eS6 from Natronomonas pharaonis (strain ATCC 35678 / DSM 2160 / CIP 103997 / JCM 8858 / NBRC 14720 / NCIMB 2260 / Gabara) (Halobacterium pharaonis).